An 84-amino-acid polypeptide reads, in one-letter code: MDDDAAPRVEGVPVAVHKHALHDGLRQVAGPGAAAAHLPRWPPPQLAASRREAPPLSQRPHRTQGAGSPPETNEKLTNPQVKEK.

The segment at 31-84 is disordered; sequence PGAAAAHLPRWPPPQLAASRREAPPLSQRPHRTQGAGSPPETNEKLTNPQVKEK. Positions 75-84 are enriched in polar residues; it reads KLTNPQVKEK.

As to expression, expressed in testis and kidney, and, at lower levels, in urinary bladder and liver. Expressed by a high proportion of tumors of various histologic origin, including melanomas, sarcomas and colorectal carcinomas.

The chain is Kidney-associated antigen 1 (KAAG1) from Homo sapiens (Human).